Reading from the N-terminus, the 318-residue chain is NADH-ubiquinone oxidoreductase chain 1 (318 aa).

The next 9 membrane-spanning stretches (helical) occupy residues 2–22, 37–57, 69–89, 100–120, 136–156, 171–191, 231–251, 253–273, and 293–313; these read FLMN…FLTL, PNIV…KLFI, LMFT…WIPM, LGVL…LWSG, VAQT…VMMM, HMWL…STLA, IIMM…NPLF, ELFT…FLWV, and FLPL…LSAG.

This sequence belongs to the complex I subunit 1 family. As to quaternary structure, core subunit of respiratory chain NADH dehydrogenase (Complex I) which is composed of 45 different subunits.

The protein resides in the mitochondrion inner membrane. The catalysed reaction is a ubiquinone + NADH + 5 H(+)(in) = a ubiquinol + NAD(+) + 4 H(+)(out). In terms of biological role, core subunit of the mitochondrial membrane respiratory chain NADH dehydrogenase (Complex I) which catalyzes electron transfer from NADH through the respiratory chain, using ubiquinone as an electron acceptor. Essential for the catalytic activity and assembly of complex I. The sequence is that of NADH-ubiquinone oxidoreductase chain 1 (MT-ND1) from Zaedyus pichiy (Pichi).